A 320-amino-acid polypeptide reads, in one-letter code: Taste receptor type 2 member 109 (320 aa).

The Extracellular segment spans residues 1 to 14 (MEHFLKSIFDISKN). The helical transmembrane segment at 15 to 35 (VLPIILFIELIIGIIGNGFMA) threads the bilayer. Residues 36-62 (LVHCMDWVKRKKMSLVNQILTTLATSR) lie on the Cytoplasmic side of the membrane. Residues 63–83 (ICLLWFMLLGLLITLLDPDLA) traverse the membrane as a helical segment. At 84-94 (SARMMIQVASN) the chain is on the extracellular side. A helical transmembrane segment spans residues 95-115 (LWIIANHMSIWLATCLTVFYF). Topologically, residues 116–135 (LKIANFSSSLFLYLKWRVEK) are cytoplasmic. The chain crosses the membrane as a helical span at residues 136–156 (VISVIFLVSLVLLFLNMLLMN). At 157–191 (LENDMCIAEYHQINISYSFIYHYRADCERRVLRLH) the chain is on the extracellular side. A glycan (N-linked (GlcNAc...) asparagine) is linked at asparagine 170. The helical transmembrane segment at 192–212 (IIILSVPFVLSLPTFLLLIFS) threads the bilayer. Residues 213 to 240 (LWTHHKKMQQHVQGRRDASTTAHFKALQ) are Cytoplasmic-facing. Residues 241 to 261 (TVIAFLLLYCIFILSMLLQFW) form a helical membrane-spanning segment. The Extracellular portion of the chain corresponds to 262 to 270 (KYELMKKPL). The chain crosses the membrane as a helical span at residues 271-291 (FILFCHIVYGAFPSFHSYVLI). The Cytoplasmic portion of the chain corresponds to 292 to 320 (LGDMKLRQASLSVLLWLKCRPNYIETLDL).

It belongs to the G-protein coupled receptor T2R family.

It is found in the membrane. In terms of biological role, putative taste receptor which may play a role in the perception of bitterness. The sequence is that of Taste receptor type 2 member 109 from Rattus norvegicus (Rat).